Reading from the N-terminus, the 284-residue chain is NAD kinase (284 aa).

Residue D61 is the Proton acceptor of the active site. Residues D61–G62, R66, N136–D137, R147, K164, D166, and L201 each bind NAD(+).

This sequence belongs to the NAD kinase family. A divalent metal cation serves as cofactor.

Its subcellular location is the cytoplasm. It catalyses the reaction NAD(+) + ATP = ADP + NADP(+) + H(+). Functionally, involved in the regulation of the intracellular balance of NAD and NADP, and is a key enzyme in the biosynthesis of NADP. Catalyzes specifically the phosphorylation on 2'-hydroxyl of the adenosine moiety of NAD to yield NADP. The polypeptide is NAD kinase (Dehalococcoides mccartyi (strain ATCC BAA-2100 / JCM 16839 / KCTC 5957 / BAV1)).